The primary structure comprises 492 residues: MTLWINGDWITGQGERRRKTNPVSAEIIWQGNDANAAQVAEACQAARAAFPRWARQPFAARQAIVEKFAALLEAHKAELTEVIARETGKPRWEAATEVTAMINKIAISIKAYHARTGEQKSELVDGAATLRHRPHGVLAVFGPYNFPGHLPNGHIVPALLAGNTLIFKPSELTPWTGETVIKLWERAGLPAGVLNLVQGGRETGQALSSLDDLDGLLFTGSASTGYQLHRQLSGQPEKILALEMGGNNPLIIEDVANIDAAVHLTLQSAFITAGQRCTCARRLLVKQGAQGDAFLARLVDVAGRLQPGRWDDDPQPFIGGLISAQAAQHVMEAWRQREALGGRTLLAPRKVKEGTSLLTPGIIELTGVADVPDEEVFGPLLNVWRYAHFDEAIRLANNTRFGLSCGLVSTDRAQFEQLLLEARAGIVNWNKPLTGAASTAPFGGVGASGNHRPSAWYAADYCAWPMVSLESPELTLPATLSPGLDFSRREAV.

220-225 (GSASTG) is an NAD(+) binding site. Catalysis depends on residues glutamate 243 and cysteine 277.

The protein belongs to the aldehyde dehydrogenase family. AstD subfamily.

It carries out the reaction N-succinyl-L-glutamate 5-semialdehyde + NAD(+) + H2O = N-succinyl-L-glutamate + NADH + 2 H(+). The protein operates within amino-acid degradation; L-arginine degradation via AST pathway; L-glutamate and succinate from L-arginine: step 4/5. Its function is as follows. Catalyzes the NAD-dependent reduction of succinylglutamate semialdehyde into succinylglutamate. The chain is N-succinylglutamate 5-semialdehyde dehydrogenase from Salmonella dublin (strain CT_02021853).